The primary structure comprises 397 residues: Cytochrome b (397 aa).

4 helical membrane-spanning segments follow: residues 48–68, 92–113, 128–148, and 193–213; these read FGSM…LLSA, WMLR…YAHI, WYFG…GYTL, and FYTL…LHLF. Heme b is bound by residues His-98 and His-112. Residues His-197 and His-211 each contribute to the heme b site. His-216 serves as a coordination point for a ubiquinone. 4 consecutive transmembrane segments (helical) span residues 241–261, 303–323, 335–355, and 362–382; these read IKDL…VCVD, AGGV…PTLH, LNQV…WIGA, and YIIL…WTPF.

The protein belongs to the cytochrome b family. The main subunits of complex b-c1 are: cytochrome b, cytochrome c1 and the Rieske protein. Requires heme b as cofactor.

The protein localises to the mitochondrion inner membrane. Component of the ubiquinol-cytochrome c reductase complex (complex III or cytochrome b-c1 complex) that is part of the mitochondrial respiratory chain. The b-c1 complex mediates electron transfer from ubiquinol to cytochrome c. Contributes to the generation of a proton gradient across the mitochondrial membrane that is then used for ATP synthesis. The protein is Cytochrome b (MT-CYB) of Mytilus edulis (Blue mussel).